The chain runs to 129 residues: MSNIPAELKYASSHEWVRKEEDGSYTVGISEHAQELLGDMVFVELPEVGDDVNSGEDCAVAESVKAASDIYAPLSGEVIAVNEALEDSPELVNSDAFGDGWFFRVMPTDLAELDNLLDAEGYQAVIDDE.

Residues 24-106 (SYTVGISEHA…FGDGWFFRVM (83 aa)) enclose the Lipoyl-binding domain. An N6-lipoyllysine modification is found at Lys65.

The protein belongs to the GcvH family. As to quaternary structure, the glycine cleavage system is composed of four proteins: P, T, L and H. The cofactor is (R)-lipoate.

Its function is as follows. The glycine cleavage system catalyzes the degradation of glycine. The H protein shuttles the methylamine group of glycine from the P protein to the T protein. The protein is Glycine cleavage system H protein of Shewanella halifaxensis (strain HAW-EB4).